Here is a 165-residue protein sequence, read N- to C-terminus: Cyclic pyranopterin monophosphate synthase (165 aa).

Residues 76 to 78 (LCH) and 119 to 120 (ME) contribute to the substrate site. Asp-134 is a catalytic residue.

It belongs to the MoaC family. Homohexamer; trimer of dimers.

It carries out the reaction (8S)-3',8-cyclo-7,8-dihydroguanosine 5'-triphosphate = cyclic pyranopterin phosphate + diphosphate. It functions in the pathway cofactor biosynthesis; molybdopterin biosynthesis. Its function is as follows. Catalyzes the conversion of (8S)-3',8-cyclo-7,8-dihydroguanosine 5'-triphosphate to cyclic pyranopterin monophosphate (cPMP). This is Cyclic pyranopterin monophosphate synthase from Photobacterium profundum (strain SS9).